The primary structure comprises 651 residues: Mitochondrial sodium/calcium exchanger protein (651 aa).

Residues 51-71 form a helical membrane-spanning segment; it reads VILIILGILYLIILFVIMSSI. Residues 72 to 91 are Cytoplasmic-facing; sequence ADDFFCPAISGIVSHLRMSE. A helical transmembrane segment spans residues 92–112; sequence SIAGVTFLAFGNGAPDVFSSI. At 113–126 the chain is on the extracellular side; it reads SSVLTTPKPKADLA. Residues 127 to 147 form a helical membrane-spanning segment; that stretch reads LGDLFGTSIFVTTVVLAIIIF. Residues 148–161 lie on the Cytoplasmic side of the membrane; the sequence is TKSFKVAIIPTLRD. A helical transmembrane segment spans residues 162–182; it reads LIFYMTTLAFIVFCFLKFDKI. A topological domain (extracellular) is located at residue E183. A helical transmembrane segment spans residues 184–204; it reads VWMPATFLGIYGVYVVTVIIL. The Cytoplasmic segment spans residues 205–398; that stretch reads GIYRTHRKKR…PSRDEFSEMN (194 aa). The chain crosses the membrane as a helical span at residues 399–419; it reads IFIKIVTVIKVVPVFFFKLTV. At 420–428 the chain is on the extracellular side; the sequence is PSNEMSWCK. Residues 429–449 form a helical membrane-spanning segment; the sequence is PLFILHCFASIQFALFSIQII. Residues 450-458 lie on the Cytoplasmic side of the membrane; sequence TLKPFDGSP. Residues 459–479 traverse the membrane as a helical segment; that stretch reads GLWLYGLGFSAILAMVAMYFL. The Extracellular segment spans residues 480 to 486; it reads PLSKEQK. The chain crosses the membrane as a helical span at residues 487–507; sequence YYKEIYSYLGFLMSIAWIYAT. The Cytoplasmic portion of the chain corresponds to 508–510; that stretch reads SNE. The chain crosses the membrane as a helical span at residues 511–531; sequence IVSVVTMIGVVTGLSMELLGL. The Extracellular portion of the chain corresponds to 532–559; sequence TIMAWSNCIGDIVADIAVVKQGYPKMAM. Residues 560-580 form a helical membrane-spanning segment; the sequence is AAAIGGPLFNLLIGFGLPFTI. The Cytoplasmic portion of the chain corresponds to 581–595; the sequence is AAAQGKEMELLINPV. A helical transmembrane segment spans residues 596–616; sequence YRLLMLFLGISLVTTFVALFI. Residues 617-626 are Extracellular-facing; it reads QRFTVRRPHA. A helical membrane pass occupies residues 627-647; sequence VLLIFIFVVFLIFICLAEFHV. Residues 648–651 are Cytoplasmic-facing; that stretch reads LEWN.

The protein belongs to the Ca(2+):cation antiporter (CaCA) (TC 2.A.19) family. SLC24A subfamily. Expressed in the seam cells of the organism. Expression is visible in the seam cells across all larval stages, and expression persists into the adult stage of the organism.

It is found in the mitochondrion inner membrane. Its activity is regulated as follows. Inhibited by the sodium/calcium exchanger inhibitor CGP-37157. Its function is as follows. Mitochondrial sodium/calcium antiporter that mediates sodium-dependent calcium efflux from mitochondrion, thereby acting as a key regulator of mitochondrion calcium homeostasis. Required for patterning of neural circuits: functions in the same pathway as RAC-dependent effectors of the unc-6/netrin signaling pathway to set left/ right patterning of the VD/DD GABAergic circuit. In Caenorhabditis elegans, this protein is Mitochondrial sodium/calcium exchanger protein.